The sequence spans 299 residues: Homoserine kinase (299 aa).

Residue proline 88–threonine 98 coordinates ATP.

The protein belongs to the GHMP kinase family. Homoserine kinase subfamily.

The protein resides in the cytoplasm. It catalyses the reaction L-homoserine + ATP = O-phospho-L-homoserine + ADP + H(+). It functions in the pathway amino-acid biosynthesis; L-threonine biosynthesis; L-threonine from L-aspartate: step 4/5. Catalyzes the ATP-dependent phosphorylation of L-homoserine to L-homoserine phosphate. This Gloeobacter violaceus (strain ATCC 29082 / PCC 7421) protein is Homoserine kinase.